A 463-amino-acid chain; its full sequence is Argininosuccinate lyase (463 aa).

It belongs to the lyase 1 family. Argininosuccinate lyase subfamily.

The protein localises to the cytoplasm. The enzyme catalyses 2-(N(omega)-L-arginino)succinate = fumarate + L-arginine. It functions in the pathway amino-acid biosynthesis; L-arginine biosynthesis; L-arginine from L-ornithine and carbamoyl phosphate: step 3/3. In Prochlorococcus marinus (strain NATL1A), this protein is Argininosuccinate lyase.